The chain runs to 255 residues: 1-(5-phosphoribosyl)-5-[(5-phosphoribosylamino)methylideneamino] imidazole-4-carboxamide isomerase (255 aa).

The active-site Proton acceptor is the Asp-8. The Proton donor role is filled by Asp-129.

Belongs to the HisA/HisF family.

The protein resides in the cytoplasm. It catalyses the reaction 1-(5-phospho-beta-D-ribosyl)-5-[(5-phospho-beta-D-ribosylamino)methylideneamino]imidazole-4-carboxamide = 5-[(5-phospho-1-deoxy-D-ribulos-1-ylimino)methylamino]-1-(5-phospho-beta-D-ribosyl)imidazole-4-carboxamide. Its pathway is amino-acid biosynthesis; L-histidine biosynthesis; L-histidine from 5-phospho-alpha-D-ribose 1-diphosphate: step 4/9. In Synechococcus sp. (strain CC9605), this protein is 1-(5-phosphoribosyl)-5-[(5-phosphoribosylamino)methylideneamino] imidazole-4-carboxamide isomerase.